An 86-amino-acid polypeptide reads, in one-letter code: Large ribosomal subunit protein bL28 (86 aa).

The protein belongs to the bacterial ribosomal protein bL28 family.

This Bacteroides fragilis (strain ATCC 25285 / DSM 2151 / CCUG 4856 / JCM 11019 / LMG 10263 / NCTC 9343 / Onslow / VPI 2553 / EN-2) protein is Large ribosomal subunit protein bL28.